We begin with the raw amino-acid sequence, 105 residues long: Met repressor (105 aa).

It belongs to the MetJ family. In terms of assembly, homodimer.

The protein resides in the cytoplasm. In terms of biological role, this regulatory protein, when combined with SAM (S-adenosylmethionine) represses the expression of the methionine regulon and of enzymes involved in SAM synthesis. The protein is Met repressor of Vibrio vulnificus (strain CMCP6).